Consider the following 328-residue polypeptide: Cytochrome c biogenesis protein CcsA (328 aa).

The next 8 helical transmembrane spans lie at 13-33 (ISFS…LVNL), 46-66 (GIII…IFSG), 73-93 (LYES…ISFF), 101-121 (LNAI…SGLL), 146-166 (MVLG…LLVI), 234-254 (IISL…VWAN), 263-283 (WDPK…YLHI), and 295-315 (AIVA…VNLL).

Belongs to the CcmF/CycK/Ccl1/NrfE/CcsA family. In terms of assembly, may interact with Ccs1.

The protein resides in the plastid. It localises to the chloroplast thylakoid membrane. In terms of biological role, required during biogenesis of c-type cytochromes (cytochrome c6 and cytochrome f) at the step of heme attachment. This is Cytochrome c biogenesis protein CcsA from Aethionema grandiflorum (Persian stone-cress).